The primary structure comprises 103 residues: MYAVFQSGGKQHRVSEGQTVRLEKLDIATGETIEFDQVLMIANGEDVKIGAPLVSGGVIKAEIVAHGRGDKIKIVKFRRRKHYRKQQGHRQWFTDVKITGISA.

Belongs to the bacterial ribosomal protein bL21 family. Part of the 50S ribosomal subunit. Contacts protein L20.

Its function is as follows. This protein binds to 23S rRNA in the presence of protein L20. This Erwinia tasmaniensis (strain DSM 17950 / CFBP 7177 / CIP 109463 / NCPPB 4357 / Et1/99) protein is Large ribosomal subunit protein bL21.